The sequence spans 629 residues: Smc-like protein Sph1 (629 aa).

2 coiled-coil regions span residues 139 to 282 (LETE…LLDD) and 318 to 487 (AETT…NQFD).

The protein belongs to the Sph1/Sph2 family.

The protein resides in the cytoplasm. Its function is as follows. May play a role in a late step of replication. This Halobacterium salinarum (Halobacterium halobium) protein is Smc-like protein Sph1 (sph1).